Reading from the N-terminus, the 204-residue chain is Outer-membrane lipoprotein LolB (204 aa).

The N-terminal stretch at Met-1–Ala-20 is a signal peptide. Cys-21 is lipidated: N-palmitoyl cysteine. Residue Cys-21 is the site of S-diacylglycerol cysteine attachment. Positions Gly-131 to Asp-150 are disordered.

The protein belongs to the LolB family. In terms of assembly, monomer.

It localises to the cell outer membrane. Its function is as follows. Plays a critical role in the incorporation of lipoproteins in the outer membrane after they are released by the LolA protein. The sequence is that of Outer-membrane lipoprotein LolB from Cupriavidus metallidurans (strain ATCC 43123 / DSM 2839 / NBRC 102507 / CH34) (Ralstonia metallidurans).